The following is a 321-amino-acid chain: MIKKIAVLTSGGDAPGMNAAIRGVVRSALSEGLEVYGIYEGYYGLYHNKIQQLTRYSVSDIINRGGTFLGSARFPEFKDPAVREKCVEILRSHGIDALVVIGGDGSYMGAKLLTEEHDFPCVGIPGTIDNDVAGTDYTIGYQTALETAVEAIDRLRDTSSSHKRISIVEIMGRHCSDLTISAAIAGGCEYIVASEIEFNREELIKQIERAIIKGKRHAIIAITELLCDVNELAREIEARVKHETRATILGHIQRGGTPCAFDRILGSRMGVYAVDLLLQGKGGYCVGIQNEQLVHHDIIDAINNMRREFKADWLAMSKRLD.

Gly12 is a binding site for ATP. Residues 22 to 26 (RGVVR) and 55 to 60 (RYSVSD) contribute to the ADP site. Residues 73–74 (RF) and 103–106 (GDGS) each bind ATP. Residue Asp104 coordinates Mg(2+). 127-129 (TID) lines the substrate pocket. Asp129 serves as the catalytic Proton acceptor. ADP is bound at residue Arg156. Substrate is bound by residues Arg164 and 171-173 (MGR). ADP contacts are provided by residues 187–189 (GCE), Lys213, and 215–217 (KRH). Residues Glu224, Arg245, and 251–254 (HIQR) each bind substrate.

Belongs to the phosphofructokinase type A (PFKA) family. ATP-dependent PFK group I subfamily. Prokaryotic clade 'B1' sub-subfamily. In terms of assembly, homotetramer. Mg(2+) is required as a cofactor.

The protein localises to the cytoplasm. The enzyme catalyses beta-D-fructose 6-phosphate + ATP = beta-D-fructose 1,6-bisphosphate + ADP + H(+). The protein operates within carbohydrate degradation; glycolysis; D-glyceraldehyde 3-phosphate and glycerone phosphate from D-glucose: step 3/4. Its activity is regulated as follows. Allosterically activated by ADP and other diphosphonucleosides, and allosterically inhibited by phosphoenolpyruvate. Functionally, catalyzes the phosphorylation of D-fructose 6-phosphate to fructose 1,6-bisphosphate by ATP, the first committing step of glycolysis. This chain is ATP-dependent 6-phosphofructokinase, found in Histophilus somni (strain 129Pt) (Haemophilus somnus).